The following is a 175-amino-acid chain: NADH-quinone oxidoreductase subunit I (175 aa).

2 4Fe-4S ferredoxin-type domains span residues 69–98 and 115–144; these read KRDE…IEAA and KKFE…LDGT. [4Fe-4S] cluster contacts are provided by cysteine 78, cysteine 81, cysteine 84, cysteine 88, cysteine 124, cysteine 127, cysteine 130, and cysteine 134.

The protein belongs to the complex I 23 kDa subunit family. In terms of assembly, NDH-1 is composed of 14 different subunits. Subunits NuoA, H, J, K, L, M, N constitute the membrane sector of the complex. It depends on [4Fe-4S] cluster as a cofactor.

The protein localises to the cell inner membrane. The catalysed reaction is a quinone + NADH + 5 H(+)(in) = a quinol + NAD(+) + 4 H(+)(out). In terms of biological role, NDH-1 shuttles electrons from NADH, via FMN and iron-sulfur (Fe-S) centers, to quinones in the respiratory chain. The immediate electron acceptor for the enzyme in this species is believed to be ubiquinone. Couples the redox reaction to proton translocation (for every two electrons transferred, four hydrogen ions are translocated across the cytoplasmic membrane), and thus conserves the redox energy in a proton gradient. In Leptospira biflexa serovar Patoc (strain Patoc 1 / Ames), this protein is NADH-quinone oxidoreductase subunit I.